A 252-amino-acid polypeptide reads, in one-letter code: 5-oxoprolinase subunit A (252 aa).

It belongs to the LamB/PxpA family. As to quaternary structure, forms a complex composed of PxpA, PxpB and PxpC.

The enzyme catalyses 5-oxo-L-proline + ATP + 2 H2O = L-glutamate + ADP + phosphate + H(+). Functionally, catalyzes the cleavage of 5-oxoproline to form L-glutamate coupled to the hydrolysis of ATP to ADP and inorganic phosphate. The sequence is that of 5-oxoprolinase subunit A from Photorhabdus laumondii subsp. laumondii (strain DSM 15139 / CIP 105565 / TT01) (Photorhabdus luminescens subsp. laumondii).